We begin with the raw amino-acid sequence, 276 residues long: NADPH-dependent 7-cyano-7-deazaguanine reductase (276 aa).

Residue Ile83–Ser85 participates in substrate binding. Ser85–Lys86 serves as a coordination point for NADPH. Cys184 functions as the Thioimide intermediate in the catalytic mechanism. Asp191 acts as the Proton donor in catalysis. His223–Glu224 provides a ligand contact to substrate. NADPH is bound at residue Arg252 to Gly253.

It belongs to the GTP cyclohydrolase I family. QueF type 2 subfamily. In terms of assembly, homodimer.

It is found in the cytoplasm. The catalysed reaction is 7-aminomethyl-7-carbaguanine + 2 NADP(+) = 7-cyano-7-deazaguanine + 2 NADPH + 3 H(+). Its pathway is tRNA modification; tRNA-queuosine biosynthesis. In terms of biological role, catalyzes the NADPH-dependent reduction of 7-cyano-7-deazaguanine (preQ0) to 7-aminomethyl-7-deazaguanine (preQ1). In Pseudomonas putida (strain W619), this protein is NADPH-dependent 7-cyano-7-deazaguanine reductase.